We begin with the raw amino-acid sequence, 440 residues long: 23S rRNA (uracil(1939)-C(5))-methyltransferase RlmD (440 aa).

The TRAM domain maps to 10-68 (KALPTQAVEITIDNLDHHLTGVGRYQGKACFVEGVLPGEKVSVQITEQKKQYAHARLRQ). Cysteine 81, cysteine 87, cysteine 90, and cysteine 169 together coordinate [4Fe-4S] cluster. S-adenosyl-L-methionine is bound by residues glutamine 272, phenylalanine 301, asparagine 306, glutamate 322, aspartate 349, and aspartate 372. Cysteine 398 serves as the catalytic Nucleophile.

The protein belongs to the class I-like SAM-binding methyltransferase superfamily. RNA M5U methyltransferase family. RlmD subfamily.

It carries out the reaction uridine(1939) in 23S rRNA + S-adenosyl-L-methionine = 5-methyluridine(1939) in 23S rRNA + S-adenosyl-L-homocysteine + H(+). In terms of biological role, catalyzes the formation of 5-methyl-uridine at position 1939 (m5U1939) in 23S rRNA. This chain is 23S rRNA (uracil(1939)-C(5))-methyltransferase RlmD, found in Tolumonas auensis (strain DSM 9187 / NBRC 110442 / TA 4).